The chain runs to 347 residues: Oxygen sensor histidine kinase NreB (347 aa).

C59, C62, C74, and C77 together coordinate [4Fe-4S] cluster. The Histidine kinase domain occupies 153 to 347 (RISRELHDGI…IVTLEVPITD (195 aa)). At H159 the chain carries Phosphohistidine; by autocatalysis.

[4Fe-4S] cluster is required as a cofactor. Post-translationally, autophosphorylated.

It localises to the cytoplasm. It carries out the reaction ATP + protein L-histidine = ADP + protein N-phospho-L-histidine.. Its activity is regulated as follows. Activated by cysteine desulfurase, Fe(2+) ions and cysteine and inhibited by oxygen and ADP. Its function is as follows. Member of the two-component regulatory system NreB/NreC involved in the control of dissimilatory nitrate/nitrite reduction in response to oxygen. NreB functions as a direct oxygen sensor histidine kinase which is autophosphorylated, in the absence of oxygen, probably at the conserved histidine residue, and transfers its phosphate group probably to a conserved aspartate residue of NreC. NreB/NreC activates the expression of the nitrate (narGHJI) and nitrite (nir) reductase operons, as well as the putative nitrate transporter gene narT. The polypeptide is Oxygen sensor histidine kinase NreB (nreB) (Staphylococcus carnosus (strain TM300)).